A 140-amino-acid polypeptide reads, in one-letter code: Smith-Magenis syndrome chromosomal region candidate gene 5 protein (140 aa).

A disordered region spans residues 43–77; sequence CTGPSSQAPPQPPQASPPAAADHSRTPSLLASSHS. Positions 49–58 are enriched in pro residues; the sequence is QAPPQPPQAS.

Widely expressed.

This is Smith-Magenis syndrome chromosomal region candidate gene 5 protein (SMCR5) from Homo sapiens (Human).